A 550-amino-acid polypeptide reads, in one-letter code: Hydroxylamine reductase (550 aa).

4 residues coordinate [2Fe-2S] cluster: Cys3, Cys6, Cys18, and Cys25. Hybrid [4Fe-2O-2S] cluster contacts are provided by His249, Glu273, Cys317, Cys405, Cys433, Cys458, Glu492, and Lys494. Cys405 bears the Cysteine persulfide mark.

It belongs to the HCP family. Requires [2Fe-2S] cluster as cofactor. Hybrid [4Fe-2O-2S] cluster is required as a cofactor.

It localises to the cytoplasm. The enzyme catalyses A + NH4(+) + H2O = hydroxylamine + AH2 + H(+). Its function is as follows. Catalyzes the reduction of hydroxylamine to form NH(3) and H(2)O. This is Hydroxylamine reductase from Yersinia pseudotuberculosis serotype O:1b (strain IP 31758).